The sequence spans 413 residues: Serine hydroxymethyltransferase (413 aa).

Residues Leu-116 and 120-122 (GHL) contribute to the (6S)-5,6,7,8-tetrahydrofolate site. Residue Lys-225 is modified to N6-(pyridoxal phosphate)lysine. 349-351 (SPF) contributes to the (6S)-5,6,7,8-tetrahydrofolate binding site.

It belongs to the SHMT family. As to quaternary structure, homodimer. Pyridoxal 5'-phosphate is required as a cofactor.

Its subcellular location is the cytoplasm. The catalysed reaction is (6R)-5,10-methylene-5,6,7,8-tetrahydrofolate + glycine + H2O = (6S)-5,6,7,8-tetrahydrofolate + L-serine. The protein operates within one-carbon metabolism; tetrahydrofolate interconversion. It functions in the pathway amino-acid biosynthesis; glycine biosynthesis; glycine from L-serine: step 1/1. Its function is as follows. Catalyzes the reversible interconversion of serine and glycine with tetrahydrofolate (THF) serving as the one-carbon carrier. This reaction serves as the major source of one-carbon groups required for the biosynthesis of purines, thymidylate, methionine, and other important biomolecules. Also exhibits THF-independent aldolase activity toward beta-hydroxyamino acids, producing glycine and aldehydes, via a retro-aldol mechanism. The polypeptide is Serine hydroxymethyltransferase (Levilactobacillus brevis (strain ATCC 367 / BCRC 12310 / CIP 105137 / JCM 1170 / LMG 11437 / NCIMB 947 / NCTC 947) (Lactobacillus brevis)).